The primary structure comprises 136 residues: Protein YebF (136 aa).

Positions 1–23 (MKKTGLALVLATILLGMMGSVHA) are cleaved as a signal peptide. Positions 30–117 (KVPACIGLNQ…KSGTMTYTGL (88 aa)) constitute a YebF/Cmi domain. An intrachain disulfide couples cysteine 34 to cysteine 107. The tract at residues 117–136 (LNAQTRPDPQIGLNSQAGPK) is disordered.

The protein belongs to the YebF family.

The protein resides in the secreted. This chain is Protein YebF, found in Yersinia pseudotuberculosis serotype O:1b (strain IP 31758).